The following is a 106-amino-acid chain: Biogenesis of lysosome-related organelles complex 1 subunit 4 (106 aa).

Positions 53–106 (THSEGLSEQLKMTEKNILEMENLFDQIDQLCLFVQKAKSDLDKLEKLYNVVDRQ) form a coiled coil.

Belongs to the BLOC1S4 family. Component of the biogenesis of lysosome-related organelles complex-1 (BLOC-1) composed at least of blos-1, blos-2, blos-4, dsbn-1, glo-2, mutd-1 and snpn-1. Interacts with glo-2.

Functionally, component of the biogenesis of lysosome-related organelles complex-1 (BLOC-1) involved in gut granule biogenesis. This Caenorhabditis elegans protein is Biogenesis of lysosome-related organelles complex 1 subunit 4 (blos-4).